The chain runs to 152 residues: Protein-export protein SecB (152 aa).

This sequence belongs to the SecB family. Homotetramer, a dimer of dimers. One homotetramer interacts with 1 SecA dimer.

It localises to the cytoplasm. In terms of biological role, one of the proteins required for the normal export of preproteins out of the cell cytoplasm. It is a molecular chaperone that binds to a subset of precursor proteins, maintaining them in a translocation-competent state. It also specifically binds to its receptor SecA. In Verminephrobacter eiseniae (strain EF01-2), this protein is Protein-export protein SecB.